We begin with the raw amino-acid sequence, 257 residues long: Neurotrophin-3 (257 aa).

The first 18 residues, 1–18, serve as a signal peptide directing secretion; it reads MSILFYVIFLAYLRGIQG. Residues 19–138 constitute a propeptide that is removed on maturation; sequence NNMDQRSLPE…VANRTSRRKR (120 aa). The tract at residues 61 to 81 is disordered; it reads STLPKAEAPREPERGGPAKSA. The span at 67 to 76 shows a compositional bias: basic and acidic residues; the sequence is EAPREPERGG. Residue Asn131 is glycosylated (N-linked (GlcNAc...) asparagine). Disulfide bonds link Cys152/Cys217, Cys195/Cys246, and Cys205/Cys248.

The protein belongs to the NGF-beta family. As to expression, brain and peripheral tissues.

It localises to the secreted. In terms of biological role, seems to promote the survival of visceral and proprioceptive sensory neurons. The chain is Neurotrophin-3 (NTF3) from Homo sapiens (Human).